A 597-amino-acid chain; its full sequence is Bromodomain-containing protein 9 (597 aa).

Residues 1-10 (MGKKHKKHKA) are compositionally biased toward basic residues. Disordered regions lie at residues 1 to 25 (MGKK…KPLE) and 38 to 138 (EVTE…ENES). 2 stretches are compositionally biased toward basic and acidic residues: residues 11-25 (EWRS…KPLE) and 50-62 (SYYD…ERER). Serine 56 is modified (phosphoserine). The span at 63–73 (HKEKKKKKKKK) shows a compositional bias: basic residues. Basic and acidic residues predominate over residues 74 to 85 (SEKEKHLDDEER). Residues 86–97 (RKRKEEKKRKRE) are compositionally biased toward basic residues. A compositionally biased stretch (basic and acidic residues) spans 111-126 (DPGKKVEVEPPPDRPV). The Bromo domain maps to 136–240 (NESTPIQQLL…HAGFKMMSKQ (105 aa)). Residues 214–216 (TYN) are histone H4K5ac H4K8ac and histone H4K5bu H4K8bu binding. Lysine 373 carries the N6-acetyllysine; alternate modification. Residue lysine 373 forms a Glycyl lysine isopeptide (Lys-Gly) (interchain with G-Cter in SUMO2); alternate linkage. Residues 536 to 597 (EAQAERGGSR…SPEPAASAKT (62 aa)) are disordered. Residues 544–556 (SRPSSNLSSLSNA) show a composition bias toward low complexity. Residues serine 566 and serine 588 each carry the phosphoserine modification.

As to quaternary structure, binds acetylated histones H3 and H4. Binds butyrylated histone H4. Component of the multiprotein chromatin-remodeling subcomplex SWI/SNF called GBAF, which includes at least BICRA or BICRAL (mutually exclusive), BRD9, SS18, the core BAF subunits, SMARCA2/BRM, SMARCA4/BRG1/BAF190A, ACTL6A/BAF53, SMARCC1/BAF155, and SMARCD1/BAF60A. Interacts (via N-terminal bromodomain) with acetylated RAD54. Interacts (via C-terminus) with RAD51.

It is found in the nucleus. Functionally, plays a role in chromatin remodeling and regulation of transcription. Acts as a chromatin reader that recognizes and binds acylated histones: binds histones that are acetylated and/or butyrylated. Component of SWI/SNF chromatin remodeling subcomplex GBAF that carries out key enzymatic activities, changing chromatin structure by altering DNA-histone contacts within a nucleosome in an ATP-dependent manner. Also orchestrates the RAD51-RAD54 complex formation and thereby plays a role in homologous recombination (HR). In Homo sapiens (Human), this protein is Bromodomain-containing protein 9 (BRD9).